The chain runs to 313 residues: Isoaspartyl peptidase (313 aa).

Residue Thr-179 is the Nucleophile of the active site. Residues 207 to 210 (RVGD) and 230 to 233 (TGTG) contribute to the substrate site.

Belongs to the Ntn-hydrolase family. In terms of assembly, heterotetramer of two alpha and two beta chains arranged as a dimer of alpha/beta heterodimers. Post-translationally, autocleaved. Generates the alpha and beta subunits. The beta subunit is thought to be responsible for the nucleophile hydrolase activity.

It catalyses the reaction Cleavage of a beta-linked Asp residue from the N-terminus of a polypeptide.. In terms of biological role, degrades proteins damaged by L-isoaspartyl residue formation (also known as beta-Asp residues). Degrades L-isoaspartyl-containing di- and tripeptides. Acts best on iso-Asp-Leu, followed by iso-Asp-Ala, -His and to a lesser extent iso-Asp-Lys, -Phe and iso-Asp-Leu-Ala. Does not act on internal iso-Asp bonds (Als-iso-Asp-Leu-Ala). Does not act on alpha-Asp bonds. Has poor L-asparaginase activity. The sequence is that of Isoaspartyl peptidase (iaaA) from Salmonella typhimurium (strain LT2 / SGSC1412 / ATCC 700720).